A 379-amino-acid polypeptide reads, in one-letter code: Putative zinc metalloprotease BMEI0829 (379 aa).

His-33 provides a ligand contact to Zn(2+). Glu-34 is a catalytic residue. Position 37 (His-37) interacts with Zn(2+). The next 4 helical transmembrane spans lie at 39–61 (LVAR…ELLG), 122–144 (VFAG…FALY), 305–327 (FDWL…LFPL), and 355–377 (IFYR…NDLF). In terms of domain architecture, PDZ spans 133-208 (TIAIFSVFFA…LNFTVERDGK (76 aa)).

It belongs to the peptidase M50B family. It depends on Zn(2+) as a cofactor.

The protein localises to the cell inner membrane. This Brucella melitensis biotype 1 (strain ATCC 23456 / CCUG 17765 / NCTC 10094 / 16M) protein is Putative zinc metalloprotease BMEI0829.